A 302-amino-acid polypeptide reads, in one-letter code: Cyclin-dependent kinase 1-B (302 aa).

In terms of domain architecture, Protein kinase spans 4-287; sequence YTKIEKIGEG…ARKAMLHPYF (284 aa). ATP-binding positions include 10–18 and Lys-33; that span reads IGEGTYGVV. Thr-14 carries the phosphothreonine modification. A Phosphotyrosine; by wee1 and wee2 modification is found at Tyr-15. The active-site Proton acceptor is Asp-128. Thr-161 carries the phosphothreonine; by cak modification. Ser-277 bears the Phosphoserine mark.

Belongs to the protein kinase superfamily. CMGC Ser/Thr protein kinase family. CDC2/CDKX subfamily. As to quaternary structure, forms a stable but non-covalent complex with a regulatory subunit and with a cyclin. Interacts with spdya. Phosphorylation at Tyr-15 by wee1 and wee2 inhibits the protein kinase activity and acts negative regulator of entry into mitosis (G2 to M transition).

Its subcellular location is the nucleus. It carries out the reaction L-seryl-[protein] + ATP = O-phospho-L-seryl-[protein] + ADP + H(+). The enzyme catalyses L-threonyl-[protein] + ATP = O-phospho-L-threonyl-[protein] + ADP + H(+). The catalysed reaction is [DNA-directed RNA polymerase] + ATP = phospho-[DNA-directed RNA polymerase] + ADP + H(+). Phosphorylation at Thr-14 or Tyr-15 inactivates the enzyme, while phosphorylation at Thr-161 activates it. In terms of biological role, plays a key role in the control of the eukaryotic cell cycle by modulating the centrosome cycle as well as mitotic onset; promotes G2-M transition via association with multiple interphase cyclins. During G2 and early mitosis, CDC25A/B/C-mediated dephosphorylation activates CDK1/cyclin complexes which phosphorylate several substrates that trigger at least centrosome separation, Golgi dynamics, nuclear envelope breakdown and chromosome condensation. Once chromosomes are condensed and aligned at the metaphase plate, CDK1 activity is switched off by WEE1- and PKMYT1-mediated phosphorylation to allow sister chromatid separation, chromosome decondensation, reformation of the nuclear envelope and cytokinesis. Catalyzes lamin (LMNA, LMNB1 and LMNB2) phosphorylation at the onset of mitosis, promoting nuclear envelope breakdown. This is Cyclin-dependent kinase 1-B (cdk1-b) from Xenopus laevis (African clawed frog).